A 483-amino-acid chain; its full sequence is Aspartyl/glutamyl-tRNA(Asn/Gln) amidotransferase subunit B (483 aa).

This sequence belongs to the GatB/GatE family. GatB subfamily. As to quaternary structure, heterotrimer of A, B and C subunits.

The catalysed reaction is L-glutamyl-tRNA(Gln) + L-glutamine + ATP + H2O = L-glutaminyl-tRNA(Gln) + L-glutamate + ADP + phosphate + H(+). It carries out the reaction L-aspartyl-tRNA(Asn) + L-glutamine + ATP + H2O = L-asparaginyl-tRNA(Asn) + L-glutamate + ADP + phosphate + 2 H(+). Its function is as follows. Allows the formation of correctly charged Asn-tRNA(Asn) or Gln-tRNA(Gln) through the transamidation of misacylated Asp-tRNA(Asn) or Glu-tRNA(Gln) in organisms which lack either or both of asparaginyl-tRNA or glutaminyl-tRNA synthetases. The reaction takes place in the presence of glutamine and ATP through an activated phospho-Asp-tRNA(Asn) or phospho-Glu-tRNA(Gln). In Roseiflexus castenholzii (strain DSM 13941 / HLO8), this protein is Aspartyl/glutamyl-tRNA(Asn/Gln) amidotransferase subunit B.